A 316-amino-acid polypeptide reads, in one-letter code: MDKLLSLNNFVSVENLENEDVEKLIKRAEYFKNGGEAPHLNKEVYVANLFFENSTRTHTSFEMAERKLGLTVIPFDPGHSSVNKGETLYDTLLTLGALGVDLSVIRHSENNYYEKLINLNPDQHLNMGIINGGDGSGQHPSQCMLDIMTIHEQFGTFKGLKVVIVGDLKNSRVARSNMQLLTRLGAKVYFSGPEYWYSSEFDKYGEYAPLDELIEDMDVVMLLRVQHERHDGDKNEKLFSETEYHKLYGLDEKRYNKLKKDAIIMHPGPVNRGVEWADELVEAPKSRYVTQMKNGVFMRMAMIEAVMRGRKLGGLE.

Carbamoyl phosphate contacts are provided by Arg-56 and Thr-57. L-aspartate is bound at residue Lys-84. Residues Arg-106, His-139, and Gln-142 each coordinate carbamoyl phosphate. Arg-172 and Arg-224 together coordinate L-aspartate. Carbamoyl phosphate contacts are provided by Gly-268 and Pro-269.

It belongs to the aspartate/ornithine carbamoyltransferase superfamily. ATCase family. In terms of assembly, heterododecamer (2C3:3R2) of six catalytic PyrB chains organized as two trimers (C3), and six regulatory PyrI chains organized as three dimers (R2).

The enzyme catalyses carbamoyl phosphate + L-aspartate = N-carbamoyl-L-aspartate + phosphate + H(+). It functions in the pathway pyrimidine metabolism; UMP biosynthesis via de novo pathway; (S)-dihydroorotate from bicarbonate: step 2/3. Functionally, catalyzes the condensation of carbamoyl phosphate and aspartate to form carbamoyl aspartate and inorganic phosphate, the committed step in the de novo pyrimidine nucleotide biosynthesis pathway. This is Aspartate carbamoyltransferase catalytic subunit from Ligilactobacillus salivarius (strain UCC118) (Lactobacillus salivarius).